We begin with the raw amino-acid sequence, 702 residues long: Protein sepa-1 (702 aa).

The tract at residues 39 to 160 (RQRFCYEKTD…KESTSYGQFR (122 aa)) is required for self-association and interaction with pgl-3. 3 consecutive short sequence motifs (LIR) follow at residues 107–110 (FVEV), 247–250 (FQKI), and 298–301 (FGFV). Residues 450–471 (AKDPEEPTTAASEGGNTYGYQE) form a disordered region. Residues 458 to 468 (TAASEGGNTYG) show a composition bias toward polar residues. The LIR 4 signature appears at 469 to 472 (YQEL). A coiled-coil region spans residues 508 to 543 (AAMDKKKKRRELKSRLNKINAQIDELEKRRMERAGK). Residues 545-564 (QVVSSSVPSEEAAQVEAPAS) form a disordered region. A KIX domain is found at 597–674 (NTSKEWIVED…TVDQILKKTL (78 aa)). Residues 675–685 (KKDQRATEHNH) are compositionally biased toward basic and acidic residues. A disordered region spans residues 675–702 (KKDQRATEHNHQQPTQSSDELAKNHEKN).

Self-associates. Interacts (via the LIR motifs) with lgg-1; the interaction is direct. Interacts (via the LIR motifs) with lgg-2; the interaction is direct. Interacts with pgl-3; interaction is enhanced in the presence of RNA. Interacts with epg-2; may be modulated by prmt-1. Degraded by autophagy.

The protein localises to the nucleus. It localises to the cytoplasm. It is found in the cytoplasmic granule. In terms of biological role, adapter protein that connects P-granules in somatic cells with the autophagic machinery. Association with other adapters such as epg-2 and P-granule components such as pgl-3 is required for the accumulation and degradation of P-granules by autophagy in somatic cells. This ensures exclusive localization of the P-granules in germ cells. This chain is Protein sepa-1, found in Caenorhabditis elegans.